Reading from the N-terminus, the 428-residue chain is Adenylosuccinate synthetase (428 aa).

GTP-binding positions include 12 to 18 and 40 to 42; these read GDEGKGK and GHT. Catalysis depends on D13, which acts as the Proton acceptor. Residues D13 and G40 each contribute to the Mg(2+) site. IMP contacts are provided by residues 13–16, 38–41, T130, R144, Q225, T240, and R304; these read DEGK and NAGH. The active-site Proton donor is the H41. 300-306 lines the substrate pocket; the sequence is VTTGRAR. Residues R306, 332-334, and 414-416 each bind GTP; these read KID and SVG.

It belongs to the adenylosuccinate synthetase family. Homodimer. Mg(2+) serves as cofactor.

The protein localises to the cytoplasm. The catalysed reaction is IMP + L-aspartate + GTP = N(6)-(1,2-dicarboxyethyl)-AMP + GDP + phosphate + 2 H(+). The protein operates within purine metabolism; AMP biosynthesis via de novo pathway; AMP from IMP: step 1/2. In terms of biological role, plays an important role in the de novo pathway of purine nucleotide biosynthesis. Catalyzes the first committed step in the biosynthesis of AMP from IMP. The protein is Adenylosuccinate synthetase of Clostridium botulinum (strain ATCC 19397 / Type A).